The following is a 561-amino-acid chain: Formate--tetrahydrofolate ligase (561 aa).

ATP is bound at residue 70–77 (TPAGEGKT).

This sequence belongs to the formate--tetrahydrofolate ligase family.

The catalysed reaction is (6S)-5,6,7,8-tetrahydrofolate + formate + ATP = (6R)-10-formyltetrahydrofolate + ADP + phosphate. The protein operates within one-carbon metabolism; tetrahydrofolate interconversion. The chain is Formate--tetrahydrofolate ligase from Pelagibacter ubique (strain HTCC1062).